The sequence spans 670 residues: DNA ligase (670 aa).

Residues 36–40 (DEEYD), 84–85 (SL), and Glu-116 each bind NAD(+). Residue Lys-118 is the N6-AMP-lysine intermediate of the active site. Residues Arg-139, Glu-177, Lys-293, and Lys-317 each contribute to the NAD(+) site. Residues Cys-411, Cys-414, Cys-429, and Cys-434 each coordinate Zn(2+). In terms of domain architecture, BRCT spans 594–670 (KKPSPLKGLT…SYEEFLKMLE (77 aa)).

It belongs to the NAD-dependent DNA ligase family. LigA subfamily. Mg(2+) is required as a cofactor. Mn(2+) serves as cofactor.

The enzyme catalyses NAD(+) + (deoxyribonucleotide)n-3'-hydroxyl + 5'-phospho-(deoxyribonucleotide)m = (deoxyribonucleotide)n+m + AMP + beta-nicotinamide D-nucleotide.. Its function is as follows. DNA ligase that catalyzes the formation of phosphodiester linkages between 5'-phosphoryl and 3'-hydroxyl groups in double-stranded DNA using NAD as a coenzyme and as the energy source for the reaction. It is essential for DNA replication and repair of damaged DNA. This is DNA ligase from Thermodesulfovibrio yellowstonii (strain ATCC 51303 / DSM 11347 / YP87).